The chain runs to 610 residues: UvrABC system protein C (610 aa).

In terms of domain architecture, GIY-YIG spans 16–94 (SQPGVYRMYD…IKLYQPRYNV (79 aa)). Residues 204 to 239 (QQVLHQLIERMENASKALNFEEAARIRDQIQAVRRV) form the UVR domain.

The protein belongs to the UvrC family. In terms of assembly, interacts with UvrB in an incision complex.

The protein resides in the cytoplasm. Functionally, the UvrABC repair system catalyzes the recognition and processing of DNA lesions. UvrC both incises the 5' and 3' sides of the lesion. The N-terminal half is responsible for the 3' incision and the C-terminal half is responsible for the 5' incision. The polypeptide is UvrABC system protein C (Serratia proteamaculans (strain 568)).